A 910-amino-acid polypeptide reads, in one-letter code: Valine--tRNA ligase (910 aa).

The 'HIGH' region motif lies at 46 to 56; the sequence is PNVTGSLHMGH. Residues 539-543 carry the 'KMSKS' region motif; sequence KMSKS. Lysine 542 contacts ATP. Residues 845 to 909 adopt a coiled-coil conformation; that stretch reads DLDILRNKIQ…QMLQERLKML (65 aa).

This sequence belongs to the class-I aminoacyl-tRNA synthetase family. ValS type 1 subfamily. In terms of assembly, monomer.

The protein localises to the cytoplasm. It catalyses the reaction tRNA(Val) + L-valine + ATP = L-valyl-tRNA(Val) + AMP + diphosphate. Catalyzes the attachment of valine to tRNA(Val). As ValRS can inadvertently accommodate and process structurally similar amino acids such as threonine, to avoid such errors, it has a 'posttransfer' editing activity that hydrolyzes mischarged Thr-tRNA(Val) in a tRNA-dependent manner. The chain is Valine--tRNA ligase from Synechocystis sp. (strain ATCC 27184 / PCC 6803 / Kazusa).